A 1163-amino-acid polypeptide reads, in one-letter code: Restriction of telomere capping protein 1 (1163 aa).

Positions 24 to 52 are disordered; that stretch reads GTPQSSNSPSANSSISSHKSSKRLSKNQL. The span at 28 to 41 shows a compositional bias: low complexity; sequence SSNSPSANSSISSH. WD repeat units follow at residues 129-169, 175-214, 221-265, 274-313, and 346-392; these read RNPN…KGTL, DHRRTVNSIDFIDSTDHIISGSQDGSIKLWDLRASPTKPV, LHND…GSNM, LHAGPVLSLHIHPEKEYVATGGRDHKICVFNYSEGRSLRT, and GMGS…IPKQ. Disordered stretches follow at residues 525–606 and 833–881; these read AGSS…GSFG and DVHS…DSTT. Composition is skewed to polar residues over residues 539–556, 571–585, 593–606, and 868–880; these read LTRSYTHNPMSQFMTKSP, SPPSAGSALSTSTYT, NPSQTTQGSAGSFG, and VHSQSNPLAIDST. The RING-type; degenerate zinc-finger motif lies at 1114–1157; the sequence is CVFCNEPCKGLVVAISLKCGHRGHFGCLKEWFIDEQNVECPGGC.

It belongs to the WD repeat RTC1 family.

It is found in the vacuole. May be involved in a process influencing telomere capping. This Lodderomyces elongisporus (strain ATCC 11503 / CBS 2605 / JCM 1781 / NBRC 1676 / NRRL YB-4239) (Yeast) protein is Restriction of telomere capping protein 1 (RTC1).